A 363-amino-acid chain; its full sequence is 3-dehydroquinate synthase (363 aa).

NAD(+) contacts are provided by residues 107-111, 131-132, Lys-144, and Lys-153; these read GVIGD and TT. Residues Glu-186, His-251, and His-268 each coordinate Zn(2+).

The protein belongs to the sugar phosphate cyclases superfamily. Dehydroquinate synthase family. It depends on NAD(+) as a cofactor. Co(2+) is required as a cofactor. Requires Zn(2+) as cofactor.

Its subcellular location is the cytoplasm. The enzyme catalyses 7-phospho-2-dehydro-3-deoxy-D-arabino-heptonate = 3-dehydroquinate + phosphate. Its pathway is metabolic intermediate biosynthesis; chorismate biosynthesis; chorismate from D-erythrose 4-phosphate and phosphoenolpyruvate: step 2/7. In terms of biological role, catalyzes the conversion of 3-deoxy-D-arabino-heptulosonate 7-phosphate (DAHP) to dehydroquinate (DHQ). In Nostoc sp. (strain PCC 7120 / SAG 25.82 / UTEX 2576), this protein is 3-dehydroquinate synthase.